The sequence spans 480 residues: Cysteine--tRNA ligase (480 aa).

Residue Cys27 participates in Zn(2+) binding. The 'HIGH' region motif lies at 29–39 (PTVYNYAHIGN). 3 residues coordinate Zn(2+): Cys221, His246, and Glu250. A 'KMSKS' region motif is present at residues 278-282 (KMSKS). Lys281 is a binding site for ATP.

The protein belongs to the class-I aminoacyl-tRNA synthetase family. In terms of assembly, monomer. Zn(2+) serves as cofactor.

The protein localises to the cytoplasm. The enzyme catalyses tRNA(Cys) + L-cysteine + ATP = L-cysteinyl-tRNA(Cys) + AMP + diphosphate. In Borreliella burgdorferi (strain ZS7) (Borrelia burgdorferi), this protein is Cysteine--tRNA ligase.